The sequence spans 83 residues: Hainantoxin-III 12 (83 aa).

Positions 1-21 (MKASMFLALAGLVLLFVVGYA) are cleaved as a signal peptide. Residues 22 to 48 (SGSEEKEFPRELLSKIFAVDDFKGEER) constitute a propeptide that is removed on maturation. Disulfide bonds link cysteine 50-cysteine 65, cysteine 57-cysteine 70, and cysteine 64-cysteine 77. A Leucine amide modification is found at leucine 81.

It belongs to the neurotoxin 10 (Hwtx-1) family. 15 (Hntx-3) subfamily. In terms of assembly, monomer. Expressed by the venom gland.

It localises to the secreted. In terms of biological role, selective antagonist of neuronal tetrodotoxin (TTX)-sensitive voltage-gated sodium channels (IC(50)=1270 nM on Nav1.1/SCN1A, 270 nM on Nav1.2/SCN2A, 491 nM on Nav1.3/SCN3A and 232 nM on Nav1.7/SCN9A). This toxin suppress Nav1.7 current amplitude without significantly altering the activation, inactivation, and repriming kinetics. Short extreme depolarizations partially activate the toxin-bound channel, indicating voltage-dependent inhibition of this toxin. This toxin increases the deactivation of the Nav1.7 current after extreme depolarizations. The toxin-Nav1.7 complex is gradually dissociated upon prolonged strong depolarizations in a voltage-dependent manner, and the unbound toxin rebinds to Nav1.7 after a long repolarization. Moreover, analysis of chimeric channels showed that the DIIS3-S4 linker is critical for toxin binding to Nav1.7. These data are consistent with this toxin interacting with Nav1.7 site 4 and trapping the domain II voltage sensor in the closed state. In Cyriopagopus hainanus (Chinese bird spider), this protein is Hainantoxin-III 12.